The primary structure comprises 282 residues: HTH-type transcriptional activator RhaR (282 aa).

One can recognise an HTH araC/xylS-type domain in the interval 179–277 (DKLITALANS…GMTPSQWRHL (99 aa)). DNA-binding regions (H-T-H motif) lie at residues 196–217 (DAFC…RAQT) and 244–267 (VSEI…TRET).

As to quaternary structure, binds DNA as a dimer.

The protein localises to the cytoplasm. Its function is as follows. Activates expression of the rhaSR operon in response to L-rhamnose. This Salmonella typhi protein is HTH-type transcriptional activator RhaR.